A 353-amino-acid chain; its full sequence is DNA polymerase IV (353 aa).

The 182-residue stretch at 6–187 (IIHIDCDCFY…LPVTKLHGVG (182 aa)) folds into the UmuC domain. Mg(2+) is bound by residues D10 and D105. E106 is a catalytic residue.

The protein belongs to the DNA polymerase type-Y family. As to quaternary structure, monomer. Requires Mg(2+) as cofactor.

It is found in the cytoplasm. It carries out the reaction DNA(n) + a 2'-deoxyribonucleoside 5'-triphosphate = DNA(n+1) + diphosphate. Its function is as follows. Poorly processive, error-prone DNA polymerase involved in untargeted mutagenesis. Copies undamaged DNA at stalled replication forks, which arise in vivo from mismatched or misaligned primer ends. These misaligned primers can be extended by PolIV. Exhibits no 3'-5' exonuclease (proofreading) activity. May be involved in translesional synthesis, in conjunction with the beta clamp from PolIII. This Pseudomonas syringae pv. tomato (strain ATCC BAA-871 / DC3000) protein is DNA polymerase IV.